A 252-amino-acid polypeptide reads, in one-letter code: Probable transcriptional regulatory protein CE1776 (252 aa).

A disordered region spans residues 1 to 22; sequence MAGHSKWATTKHKKAANDAKRG.

This sequence belongs to the TACO1 family.

The protein localises to the cytoplasm. The sequence is that of Probable transcriptional regulatory protein CE1776 from Corynebacterium efficiens (strain DSM 44549 / YS-314 / AJ 12310 / JCM 11189 / NBRC 100395).